The sequence spans 276 residues: Omega-amidase NIT2-B (276 aa).

The 245-residue stretch at 4–248 (FRLSLVQFLV…ETVISADIDL (245 aa)) folds into the CN hydrolase domain. E43 functions as the Proton acceptor in the catalytic mechanism. K112 serves as the catalytic Proton donor. The active-site Nucleophile is the C153.

This sequence belongs to the carbon-nitrogen hydrolase superfamily. NIT1/NIT2 family. Homodimer.

Its subcellular location is the cytoplasm. The enzyme catalyses 2-oxoglutaramate + H2O = 2-oxoglutarate + NH4(+). It catalyses the reaction 2-oxosuccinamate + H2O = oxaloacetate + NH4(+). Its function is as follows. Has omega-amidase activity. The role of omega-amidase is to remove potentially toxic intermediates by converting 2-oxoglutaramate and 2-oxosuccinamate to biologically useful 2-oxoglutarate and oxaloacetate, respectively. This is Omega-amidase NIT2-B (nit2b) from Xenopus laevis (African clawed frog).